Consider the following 937-residue polypeptide: Chaperone protein ClpD2, chloroplastic (937 aa).

The N-terminal 80 residues, 1–80 (MEACCCSSSS…FERFTERAVK (80 aa)), are a transit peptide targeting the chloroplast. 2 repeat regions span residues 81 to 137 (AVVF…VGKE) and 152 to 217 (FSGA…VQGE). The Clp R domain occupies 81–217 (AVVFSQREAR…KQALTRVQGE (137 aa)). The i stretch occupies residues 259-513 (LALFCLDLTM…RMESFKRKKE (255 aa)). ATP is bound by residues 304-311 (GEAGVGKT) and 658-665 (GPTGVGKT). Residues 584–775 (VGSEEIARVT…LIVMTSNVGS (192 aa)) are II.

The protein belongs to the ClpA/ClpB family. ClpD subfamily. As to expression, highly expressed in stems, culms and leaves.

The protein localises to the plastid. The protein resides in the chloroplast. Its function is as follows. Molecular chaperone that may interact with a ClpP-like protease involved in degradation of denatured proteins in the chloroplast. This is Chaperone protein ClpD2, chloroplastic (CLPD2) from Oryza sativa subsp. japonica (Rice).